The sequence spans 973 residues: Vacuolar protein sorting-associated protein 18 homolog (973 aa).

At Ala-2 the chain carries N-acetylalanine. Phosphoserine occurs at positions 3, 11, and 13. Lys-362 carries the post-translational modification N6-acetyllysine. Residues 454–481 (EEIALKFLEARQEEALAEFLQRKLASLK) adopt a coiled-coil conformation. One copy of the CHCR repeat lies at 618 to 772 (GSRLDARQLI…VVQEEEDVQT (155 aa)). Ser-689 bears the Phosphoserine mark. Residues 802 to 848 (KEAICSSLKAYNHHIQELQREMEEATASAQRIRRDLQELRGRYGTVE) are a coiled coil. The RING-type zinc finger occupies 853 to 947 (CATCDFPLLN…ELVAAECVYC (95 aa)). Positions 903-929 (GAAPPPAKGSARAKEAEGGAATAGPSR) are disordered. Ser-912 is modified (phosphoserine).

Belongs to the VPS18 family. Core component of at least two putative endosomal tethering complexes, the homotypic fusion and vacuole protein sorting (HOPS) complex and the class C core vacuole/endosome tethering (CORVET) complex. Their common core is composed of the class C Vps proteins VPS11, VPS16, VPS18 and VPS33A, which in HOPS further associates with VPS39 and VPS41 and in CORVET with VPS8 and TGFBRAP1. Interacts with RAB5C. Interacts with HOOK1. Interacts with STX7, MON1B. Associates with adaptor protein complex 3 (AP-3) and clathrin:AP-3 complexes. Interacts with SYNPO2. Interacts with PLEKHM1. As to expression, ubiquitous. Expression was highest in heart and low in lung.

Its subcellular location is the late endosome membrane. It is found in the lysosome membrane. It localises to the early endosome. The protein localises to the cytoplasmic vesicle. The protein resides in the autophagosome. Its subcellular location is the clathrin-coated vesicle. Plays a role in vesicle-mediated protein trafficking to lysosomal compartments including the endocytic membrane transport and autophagic pathways. Believed to act as a core component of the putative HOPS and CORVET endosomal tethering complexes which are proposed to be involved in the Rab5-to-Rab7 endosome conversion probably implicating MON1A/B, and via binding SNAREs and SNARE complexes to mediate tethering and docking events during SNARE-mediated membrane fusion. The HOPS complex is proposed to be recruited to Rab7 on the late endosomal membrane and to regulate late endocytic, phagocytic and autophagic traffic towards lysosomes. The CORVET complex is proposed to function as a Rab5 effector to mediate early endosome fusion probably in specific endosome subpopulations. Required for fusion of endosomes and autophagosomes with lysosomes. Involved in dendrite development of Pukinje cells. This Homo sapiens (Human) protein is Vacuolar protein sorting-associated protein 18 homolog.